Here is a 194-residue protein sequence, read N- to C-terminus: Chitin synthase 2 (194 aa).

Belongs to the chitin synthase family. Class III subfamily.

It localises to the cell membrane. It carries out the reaction [(1-&gt;4)-N-acetyl-beta-D-glucosaminyl](n) + UDP-N-acetyl-alpha-D-glucosamine = [(1-&gt;4)-N-acetyl-beta-D-glucosaminyl](n+1) + UDP + H(+). In terms of biological role, polymerizes chitin, a structural polymer of the cell wall and septum, by transferring the sugar moiety of UDP-GlcNAc to the non-reducing end of the growing chitin polymer. The sequence is that of Chitin synthase 2 (CHS2) from Ajellomyces capsulatus (Darling's disease fungus).